The sequence spans 469 residues: 3-isopropylmalate dehydratase large subunit (469 aa).

The [4Fe-4S] cluster site is built by C350, C410, and C413.

The protein belongs to the aconitase/IPM isomerase family. LeuC type 1 subfamily. Heterodimer of LeuC and LeuD. [4Fe-4S] cluster is required as a cofactor.

It carries out the reaction (2R,3S)-3-isopropylmalate = (2S)-2-isopropylmalate. Its pathway is amino-acid biosynthesis; L-leucine biosynthesis; L-leucine from 3-methyl-2-oxobutanoate: step 2/4. Catalyzes the isomerization between 2-isopropylmalate and 3-isopropylmalate, via the formation of 2-isopropylmaleate. The protein is 3-isopropylmalate dehydratase large subunit of Agrobacterium fabrum (strain C58 / ATCC 33970) (Agrobacterium tumefaciens (strain C58)).